Consider the following 271-residue polypeptide: Small ribosomal subunit protein uS3 (271 aa).

The region spanning 40 to 108 is the KH type-2 domain; the sequence is IRKFLKKRLY…TIIVNIVEVR (69 aa). The interval 210–271 is disordered; it reads PTRDGVNPRE…RPQRTENKGN (62 aa). A compositionally biased stretch (basic and acidic residues) spans 215–247; that stretch reads VNPREESRKSDRRDNKRDNRRNDRRGNDRRGND.

This sequence belongs to the universal ribosomal protein uS3 family. Part of the 30S ribosomal subunit. Forms a tight complex with proteins S10 and S14.

Its function is as follows. Binds the lower part of the 30S subunit head. Binds mRNA in the 70S ribosome, positioning it for translation. The protein is Small ribosomal subunit protein uS3 of Clostridioides difficile (strain 630) (Peptoclostridium difficile).